Here is a 299-residue protein sequence, read N- to C-terminus: ATP synthase gamma chain (299 aa).

This sequence belongs to the ATPase gamma chain family. As to quaternary structure, F-type ATPases have 2 components, CF(1) - the catalytic core - and CF(0) - the membrane proton channel. CF(1) has five subunits: alpha(3), beta(3), gamma(1), delta(1), epsilon(1). CF(0) has three main subunits: a, b and c.

Its subcellular location is the cell membrane. Functionally, produces ATP from ADP in the presence of a proton gradient across the membrane. The gamma chain is believed to be important in regulating ATPase activity and the flow of protons through the CF(0) complex. This Levilactobacillus brevis (strain ATCC 367 / BCRC 12310 / CIP 105137 / JCM 1170 / LMG 11437 / NCIMB 947 / NCTC 947) (Lactobacillus brevis) protein is ATP synthase gamma chain.